Consider the following 685-residue polypeptide: Keratin, type II cytoskeletal 2 epidermal (685 aa).

The segment at M1–G20 is disordered. The head stretch occupies residues M1 to Q196. Asymmetric dimethylarginine is present on R22. S25 and S28 each carry phosphoserine. R52 carries the post-translational modification Omega-N-methylarginine. At S64 the chain carries Phosphoserine. The coil 1A stretch occupies residues E197–L232. Positions E197–M511 constitute an IF rod domain. The interval Q233–Y251 is linker 1. Positions I252–L343 are coil 1B. The linker 12 stretch occupies residues Q344 to I367. The tract at residues I368 to E507 is coil 2. Residues E508–R685 are tail. A disordered region spans residues V532–R685. Residues F538–S678 show a composition bias toward gly residues. Omega-N-methylarginine is present on residues R554, R588, R603, and R653.

The protein belongs to the intermediate filament family. As to quaternary structure, heterotetramer of two type I and two type II keratins. Associates with KRT10.

Its subcellular location is the cytoplasm. Functionally, probably contributes to terminal cornification. Associated with keratinocyte activation, proliferation and keratinization. Required for maintenance of corneocytes and keratin filaments in suprabasal keratinocytes in the epidermis of the ear, potentially via moderation of expression and localization of keratins and their partner proteins. Plays a role in the establishment of the epidermal barrier on plantar skin. The sequence is that of Keratin, type II cytoskeletal 2 epidermal from Rattus norvegicus (Rat).